The following is a 1217-amino-acid chain: CST complex subunit CTC1 (1217 aa).

The disordered stretch occupies residues L327–P346.

This sequence belongs to the CTC1 family. Component of the CST complex, composed of TEN1/C17orf106, CTC1/C17orf68 and STN1; in the complex interacts directly with STN1. Interacts with ACD and POT1.

It localises to the nucleus. It is found in the chromosome. Its subcellular location is the telomere. Its function is as follows. Component of the CST complex proposed to act as a specialized replication factor promoting DNA replication under conditions of replication stress or natural replication barriers such as the telomere duplex. The CST complex binds single-stranded DNA with high affinity in a sequence-independent manner, while isolated subunits bind DNA with low affinity by themselves. Initially the CST complex has been proposed to protect telomeres from DNA degradation. However, the CST complex has been shown to be involved in several aspects of telomere replication. The CST complex inhibits telomerase and is involved in telomere length homeostasis; it is proposed to bind to newly telomerase-synthesized 3' overhangs and to terminate telomerase action implicating the association with the ACD:POT1 complex thus interfering with its telomerase stimulation activity. The CST complex is also proposed to be involved in fill-in synthesis of the telomeric C-strand probably implicating recruitment and activation of DNA polymerase alpha. The CST complex facilitates recovery from many forms of exogenous DNA damage; seems to be involved in the re-initiation of DNA replication at repaired forks and/or dormant origins. Involved in telomere maintenance. Involved in genome stability. May be in involved in telomeric C-strand fill-in during late S/G2 phase. This is CST complex subunit CTC1 (CTC1) from Pongo abelii (Sumatran orangutan).